The sequence spans 520 residues: Cobyric acid synthase (520 aa).

The 179-residue stretch at 275–453 (VLRVAVIRLP…WHGVLENDAF (179 aa)) folds into the GATase cobBQ-type domain. The active-site Nucleophile is the C356. Residue H445 is part of the active site.

The protein belongs to the CobB/CobQ family. CobQ subfamily.

Its pathway is cofactor biosynthesis; adenosylcobalamin biosynthesis. Its function is as follows. Catalyzes amidations at positions B, D, E, and G on adenosylcobyrinic A,C-diamide. NH(2) groups are provided by glutamine, and one molecule of ATP is hydrogenolyzed for each amidation. The chain is Cobyric acid synthase from Frankia casuarinae (strain DSM 45818 / CECT 9043 / HFP020203 / CcI3).